The chain runs to 515 residues: Maturase K (515 aa).

It belongs to the intron maturase 2 family. MatK subfamily.

It is found in the plastid. The protein resides in the chloroplast. In terms of biological role, usually encoded in the trnK tRNA gene intron. Probably assists in splicing its own and other chloroplast group II introns. This Pinus armandii (Chinese white pine) protein is Maturase K.